Reading from the N-terminus, the 534-residue chain is MRLITRWIPLANALASTMPVQVVASIENPSLLPTPPMGFNNWARFMCDLNETLFVETTDAMASNGLLEAGYNRINLDDCWMNYDRAENGSLEWNVTKFPRGLPWLGQYVKSKGFNFGIYEDSGNLTCGGYPGSEGYEEIDAETFAAWGIDYLKLDGCNVYPKEGRTLQEEYKYLYGNWHEILSKMQQPLIFSESAPAYFSMTDNLTDWHTVMDWVPEYGELARHSVDILVYSGEGSAWDSIMTNYKFNTLVARYQRPGYYNDPDFLIADHPGLSLDEKRSQFALWASFSAPLIISAHIPDLSSEDLEYLTNQALIAVDQDPLAQQATLASRDGSLDVLTRNLADGSRLVTILNHGSESIETDISLDILGLSTDCTYKAQDLWGGSTQTIKDAIRIKLNTHATAVYKIDTDEKCSQVIPTGLIFNTASGKCLTGTSSSVGSESCNGSKSQIWQIDASGVIRTLSEQSKCLTADGKAISLQECSENNGQKWSYAITGNLKNADTGYCLTNGGGVSACGFETNSQVFGLPAGVHVAL.

The N-terminal stretch at 1 to 25 (MRLITRWIPLANALASTMPVQVVAS) is a signal peptide. A disulfide bridge links C47 with C79. N-linked (GlcNAc...) asparagine glycans are attached at residues N50, N88, N94, and N124. A disulfide bridge links C127 with C157. D155 serves as the catalytic Nucleophile. Residue N204 is glycosylated (N-linked (GlcNAc...) asparagine). The Proton donor role is filled by D213. Residues 413 to 534 (CSQVIPTGLI…GLPAGVHVAL (122 aa)) form the Ricin B-type lectin domain. C430 and C443 are disulfide-bonded. N-linked (GlcNAc...) asparagine glycosylation occurs at N444. C468 and C481 are joined by a disulfide.

The protein belongs to the glycosyl hydrolase 27 family.

It localises to the secreted. The catalysed reaction is Hydrolysis of terminal, non-reducing alpha-D-galactose residues in alpha-D-galactosides, including galactose oligosaccharides, galactomannans and galactolipids.. Hydrolyzes a variety of simple alpha-D-galactoside as well as more complex molecules such as oligosaccharides and polysaccharides. This Aspergillus flavus (strain ATCC 200026 / FGSC A1120 / IAM 13836 / NRRL 3357 / JCM 12722 / SRRC 167) protein is Probable alpha-galactosidase A (aglA).